The following is a 632-amino-acid chain: Extracellular metalloproteinase 1 (632 aa).

The signal sequence occupies residues 1–19; sequence MHGLLLAAGLLSLPLRVLA. The propeptide occupies 20-243; that stretch reads HPQPSTSLTS…VHNVVDYVSH (224 aa). N-linked (GlcNAc...) asparagine glycosylation occurs at Asn-284. His-427 serves as a coordination point for Zn(2+). Residue Glu-428 is part of the active site. His-431 contributes to the Zn(2+) binding site. Asn-591 and Asn-620 each carry an N-linked (GlcNAc...) asparagine glycan.

Belongs to the peptidase M36 family. It depends on Zn(2+) as a cofactor.

The protein resides in the secreted. In terms of biological role, secreted metalloproteinase that allows assimilation of proteinaceous substrates and probably acts as a virulence factor. In Arthroderma gypseum (strain ATCC MYA-4604 / CBS 118893) (Microsporum gypseum), this protein is Extracellular metalloproteinase 1 (MEP1).